Consider the following 89-residue polypeptide: MSDRKAVIKNADMSEEMQQDAVDCATQALEKYNIEKDIAAYIKKEFDKKYNPTWHCIVGRNFGSYVTHETRHFIYFYLGQVAILLFKSG.

The protein belongs to the dynein light chain family. In terms of assembly, interacts with spn-F. Forms ternary complexes with spn-F and IKKepsilon. Ubiquitous.

The protein localises to the cytoplasm. It localises to the cytoskeleton. In terms of biological role, acts as a non-catalytic accessory component of a dynein complex. The chain is Dynein light chain 1, cytoplasmic (ctp) from Drosophila melanogaster (Fruit fly).